The following is a 291-amino-acid chain: 33 kDa chaperonin (291 aa).

2 disulfides stabilise this stretch: cysteine 229-cysteine 231 and cysteine 262-cysteine 265.

This sequence belongs to the HSP33 family. In terms of processing, under oxidizing conditions two disulfide bonds are formed involving the reactive cysteines. Under reducing conditions zinc is bound to the reactive cysteines and the protein is inactive.

The protein localises to the cytoplasm. Its function is as follows. Redox regulated molecular chaperone. Protects both thermally unfolding and oxidatively damaged proteins from irreversible aggregation. Plays an important role in the bacterial defense system toward oxidative stress. This Aliivibrio salmonicida (strain LFI1238) (Vibrio salmonicida (strain LFI1238)) protein is 33 kDa chaperonin.